We begin with the raw amino-acid sequence, 196 residues long: SPRY domain-containing protein 7 (196 aa).

Ala-2 carries the N-acetylalanine modification. In terms of domain architecture, B30.2/SPRY spans 2-184 (AASVFCCLRC…FSEFYHTPPP (183 aa)).

This chain is SPRY domain-containing protein 7 (SPRYD7), found in Bos taurus (Bovine).